The sequence spans 477 residues: Glycogen synthase (477 aa).

Residue lysine 15 participates in ADP-alpha-D-glucose binding.

Belongs to the glycosyltransferase 1 family. Bacterial/plant glycogen synthase subfamily.

It carries out the reaction [(1-&gt;4)-alpha-D-glucosyl](n) + ADP-alpha-D-glucose = [(1-&gt;4)-alpha-D-glucosyl](n+1) + ADP + H(+). It participates in glycan biosynthesis; glycogen biosynthesis. In terms of biological role, synthesizes alpha-1,4-glucan chains using ADP-glucose. This is Glycogen synthase from Erwinia tasmaniensis (strain DSM 17950 / CFBP 7177 / CIP 109463 / NCPPB 4357 / Et1/99).